A 711-amino-acid chain; its full sequence is DNA ligase (711 aa).

Positions 1–21 (MNATHRGAQADASAPAGGLPP) are disordered. Residues 10–21 (ADASAPAGGLPP) show a composition bias toward low complexity. Residues 52 to 56 (DAEYD), 101 to 102 (SL), and E146 each bind NAD(+). K148 serves as the catalytic N6-AMP-lysine intermediate. R169, E205, K322, and K346 together coordinate NAD(+). Residues C440, C443, C458, and C464 each coordinate Zn(2+). Residues 623-711 (RAPAPLAGKT…VGAGQPGEQS (89 aa)) form the BRCT domain.

The protein belongs to the NAD-dependent DNA ligase family. LigA subfamily. Mg(2+) is required as a cofactor. It depends on Mn(2+) as a cofactor.

The enzyme catalyses NAD(+) + (deoxyribonucleotide)n-3'-hydroxyl + 5'-phospho-(deoxyribonucleotide)m = (deoxyribonucleotide)n+m + AMP + beta-nicotinamide D-nucleotide.. Its function is as follows. DNA ligase that catalyzes the formation of phosphodiester linkages between 5'-phosphoryl and 3'-hydroxyl groups in double-stranded DNA using NAD as a coenzyme and as the energy source for the reaction. It is essential for DNA replication and repair of damaged DNA. This Cupriavidus pinatubonensis (strain JMP 134 / LMG 1197) (Cupriavidus necator (strain JMP 134)) protein is DNA ligase.